We begin with the raw amino-acid sequence, 502 residues long: ATP synthase subunit alpha (502 aa).

169–176 contributes to the ATP binding site; it reads GDRQVGKT.

Belongs to the ATPase alpha/beta chains family. As to quaternary structure, F-type ATPases have 2 components, CF(1) - the catalytic core - and CF(0) - the membrane proton channel. CF(1) has five subunits: alpha(3), beta(3), gamma(1), delta(1), epsilon(1). CF(0) has three main subunits: a(1), b(2) and c(9-12). The alpha and beta chains form an alternating ring which encloses part of the gamma chain. CF(1) is attached to CF(0) by a central stalk formed by the gamma and epsilon chains, while a peripheral stalk is formed by the delta and b chains.

The protein resides in the cell membrane. It carries out the reaction ATP + H2O + 4 H(+)(in) = ADP + phosphate + 5 H(+)(out). In terms of biological role, produces ATP from ADP in the presence of a proton gradient across the membrane. The alpha chain is a regulatory subunit. This Lysinibacillus sphaericus (strain C3-41) protein is ATP synthase subunit alpha.